A 496-amino-acid polypeptide reads, in one-letter code: Transmembrane transporter swnT (496 aa).

5 helical membrane passes run 40 to 60 (LSAI…PLIL), 72 to 92 (VFWG…TLAE), 124 to 144 (AMIS…SVPL), 162 to 182 (WMGF…ACFE), and 191 to 211 (AFLL…FAMA). N-linked (GlcNAc...) asparagine glycosylation occurs at Asn-225. 6 consecutive transmembrane segments (helical) span residues 270 to 290 (LLWT…AVLV), 314 to 334 (AAAI…VWSI), 368 to 388 (PIWS…LYLA), 396 to 416 (LIAT…VLVL), 434 to 454 (GLVA…FYCF), and 467 to 487 (YVSG…ILYA).

It belongs to the amino acid-polyamine-organocation (APC) superfamily. Amino acid/choline transporter (ACT) (TC 2.A.3.4) family.

The protein localises to the membrane. Its function is as follows. Transmembrane transporter; part of the gene cluster that mediates the biosynthesis of swainsonine, a cytotoxic fungal alkaloid and a potential cancer therapy drug. Does not mediate the secretion of SW and the exact role of swnT in SW biosynthesis remains to be determined. This chain is Transmembrane transporter swnT, found in Metarhizium robertsii (strain ARSEF 23 / ATCC MYA-3075) (Metarhizium anisopliae (strain ARSEF 23)).